Here is a 332-residue protein sequence, read N- to C-terminus: Holliday junction branch migration complex subunit RuvB (332 aa).

The segment at 1-181 (MTRFLDSDAM…FGITGHMEYY (181 aa)) is large ATPase domain (RuvB-L). Residues Leu20, Arg21, Gly62, Lys65, Thr66, Thr67, 128 to 130 (EDF), Arg171, Tyr181, and Arg218 each bind ATP. Thr66 is a Mg(2+) binding site. The tract at residues 182–252 (EENDLTEIIE…ITDKALTMLD (71 aa)) is small ATPAse domain (RuvB-S). Positions 255 to 332 (HEGLDYVDQK…EHLGYQRFDK (78 aa)) are head domain (RuvB-H). DNA is bound by residues Arg291, Arg310, Arg312, and Arg315.

It belongs to the RuvB family. Homohexamer. Forms an RuvA(8)-RuvB(12)-Holliday junction (HJ) complex. HJ DNA is sandwiched between 2 RuvA tetramers; dsDNA enters through RuvA and exits via RuvB. An RuvB hexamer assembles on each DNA strand where it exits the tetramer. Each RuvB hexamer is contacted by two RuvA subunits (via domain III) on 2 adjacent RuvB subunits; this complex drives branch migration. In the full resolvosome a probable DNA-RuvA(4)-RuvB(12)-RuvC(2) complex forms which resolves the HJ.

The protein localises to the cytoplasm. It carries out the reaction ATP + H2O = ADP + phosphate + H(+). Functionally, the RuvA-RuvB-RuvC complex processes Holliday junction (HJ) DNA during genetic recombination and DNA repair, while the RuvA-RuvB complex plays an important role in the rescue of blocked DNA replication forks via replication fork reversal (RFR). RuvA specifically binds to HJ cruciform DNA, conferring on it an open structure. The RuvB hexamer acts as an ATP-dependent pump, pulling dsDNA into and through the RuvAB complex. RuvB forms 2 homohexamers on either side of HJ DNA bound by 1 or 2 RuvA tetramers; 4 subunits per hexamer contact DNA at a time. Coordinated motions by a converter formed by DNA-disengaged RuvB subunits stimulates ATP hydrolysis and nucleotide exchange. Immobilization of the converter enables RuvB to convert the ATP-contained energy into a lever motion, pulling 2 nucleotides of DNA out of the RuvA tetramer per ATP hydrolyzed, thus driving DNA branch migration. The RuvB motors rotate together with the DNA substrate, which together with the progressing nucleotide cycle form the mechanistic basis for DNA recombination by continuous HJ branch migration. Branch migration allows RuvC to scan DNA until it finds its consensus sequence, where it cleaves and resolves cruciform DNA. This is Holliday junction branch migration complex subunit RuvB from Streptococcus agalactiae serotype V (strain ATCC BAA-611 / 2603 V/R).